Here is a 276-residue protein sequence, read N- to C-terminus: UPF0328 protein ECU01_0090/ECU01_1520/ECU02_1550/ECU08_0020 (276 aa).

The disordered stretch occupies residues 1 to 24 (MGIIDVQRSHLTATPSKERDAPAH).

It belongs to the UPF0328 family.

This chain is UPF0328 protein ECU01_0090/ECU01_1520/ECU02_1550/ECU08_0020, found in Encephalitozoon cuniculi (strain GB-M1) (Microsporidian parasite).